Consider the following 502-residue polypeptide: Glycerol kinase (502 aa).

Thr-13 is an ADP binding site. Residues Thr-13, Thr-14, and Ser-15 each contribute to the ATP site. Sn-glycerol 3-phosphate is bound at residue Thr-13. Arg-17 provides a ligand contact to ADP. Positions 83, 84, 136, and 246 each coordinate sn-glycerol 3-phosphate. 5 residues coordinate glycerol: Arg-83, Glu-84, Tyr-136, Asp-246, and Gln-247. The ADP site is built by Thr-268 and Gly-311. Residues Thr-268, Gly-311, Gln-315, and Gly-412 each coordinate ATP. Gly-412 and Asn-416 together coordinate ADP.

The protein belongs to the FGGY kinase family.

The catalysed reaction is glycerol + ATP = sn-glycerol 3-phosphate + ADP + H(+). The protein operates within polyol metabolism; glycerol degradation via glycerol kinase pathway; sn-glycerol 3-phosphate from glycerol: step 1/1. Its activity is regulated as follows. Inhibited by fructose 1,6-bisphosphate (FBP). Functionally, key enzyme in the regulation of glycerol uptake and metabolism. Catalyzes the phosphorylation of glycerol to yield sn-glycerol 3-phosphate. This chain is Glycerol kinase, found in Francisella tularensis subsp. tularensis (strain WY96-3418).